The chain runs to 61 residues: Photosystem II reaction center X protein (61 aa).

A helical transmembrane segment spans residues 26-46 (IGSFIAAALLIVIPATAFLIF).

The protein belongs to the PsbX family. Type 2 subfamily. In terms of assembly, PSII consists of a core antenna complex that captures photons, and an electron transfer chain that converts photonic excitation into a charge separation. PSII forms dimeric complexes.

Its subcellular location is the cellular thylakoid membrane. In terms of biological role, involved in the binding and/or turnover of quinones at the Q(B) site of Photosystem II. The sequence is that of Photosystem II reaction center X protein from Prochlorococcus marinus (strain MIT 9215).